Here is a 242-residue protein sequence, read N- to C-terminus: MRCFKAIVAYDGAYFLGYAKQPNKLGVQDKIESALNALGIKSGVIAAGRTDKGVHANNQALSFHAPKHWNAAKLFHYLAPKLAPHIVLKKLEEKNFHARFDAQKRAYRYLLTKNLKTPFLAPYIACGDYGSLDALNIALKQFIGKHDFSMFKKEGGATTNPNRIIFNALAYKTFIMGHECVVFKIIGDAFLRSSVRLIIQACVQYSLEKITLAEIQAQIHNLKATIRTPIMANGLYLHRVYY.

D51 serves as the catalytic Nucleophile. Y107 serves as a coordination point for substrate.

The protein belongs to the tRNA pseudouridine synthase TruA family. In terms of assembly, homodimer.

The enzyme catalyses uridine(38/39/40) in tRNA = pseudouridine(38/39/40) in tRNA. Functionally, formation of pseudouridine at positions 38, 39 and 40 in the anticodon stem and loop of transfer RNAs. The protein is tRNA pseudouridine synthase A of Helicobacter pylori (strain J99 / ATCC 700824) (Campylobacter pylori J99).